A 74-amino-acid polypeptide reads, in one-letter code: Large ribosomal subunit protein uL29 (74 aa).

Belongs to the universal ribosomal protein uL29 family.

This chain is Large ribosomal subunit protein uL29, found in Cyanothece sp. (strain PCC 7425 / ATCC 29141).